Reading from the N-terminus, the 89-residue chain is MGKRKSAAKPPPKKRMDKLDTVFSCPFCNHGSSVECRIDMKNLIGEASCRICQENFSTTVNALTEPIDIYSEWIDECERVNNVEDDDGA.

Positions 25, 28, 49, and 52 each coordinate Zn(2+).

This sequence belongs to the ELOF1 family.

The protein resides in the nucleus. Functionally, transcription elongation factor implicated in the maintenance of proper chromatin structure in actively transcribed regions. The chain is Transcription elongation factor 1 homolog from Oryza sativa subsp. japonica (Rice).